The following is a 344-amino-acid chain: Ferredoxin--NADP reductase (344 aa).

FAD contacts are provided by serine 12, aspartate 31, lysine 39, tyrosine 43, valine 83, isoleucine 118, aspartate 285, and serine 326.

This sequence belongs to the ferredoxin--NADP reductase type 2 family. In terms of assembly, homodimer. FAD is required as a cofactor.

The catalysed reaction is 2 reduced [2Fe-2S]-[ferredoxin] + NADP(+) + H(+) = 2 oxidized [2Fe-2S]-[ferredoxin] + NADPH. The sequence is that of Ferredoxin--NADP reductase from Staphylococcus aureus (strain JH1).